Consider the following 524-residue polypeptide: Coronin-2A (524 aa).

WD repeat units follow at residues 80–120 (GHRG…LTRN), 130–170 (GHAR…SVIA), 178–217 (CHQDVILSMSFNTNGSLLATTCKDRKIRIVDPRLGIVLQE), 220–263 (YKGH…VPLT), and 269–308 (GSSGVLFPFFDSDTSMLYIVGKGDGNIRYYEVSMEKPHLT). The disordered stretch occupies residues 403-436 (LLDSQTLPPERPLSNSMVQVSPQPLEPMKQPAED). Positions 404-424 (LDSQTLPPERPLSNSMVQVSP) are enriched in polar residues. A coiled-coil region spans residues 484–523 (QMFYRQQEEIRRLRELLIQREVQTKQLELEIKNLRMALGQ).

Belongs to the WD repeat coronin family. In terms of assembly, binds actin. Component of the N-Cor repressor complex, at least composed of NCOR1, NCOR2, HDAC3, TBL1X, TBL1R, CORO2A and GPS2.

In Mus musculus (Mouse), this protein is Coronin-2A (Coro2a).